A 2224-amino-acid polypeptide reads, in one-letter code: Protein sidekick (2224 aa).

An N-terminal signal peptide occupies residues 1 to 47; that stretch reads MLKSAASSLRRRRPKTTITATLAIEMPSQPKLASLLAVLVLLCYCDS. The Extracellular segment spans residues 48 to 2001; sequence CFFCYADANL…LQHKPFYRQT (1954 aa). An Ig-like C2-type 1 domain is found at 72-155; sequence PRFTTHPSSS…SIFSEKSDVV (84 aa). A disulfide bridge links C95 with C138. N-linked (GlcNAc...) asparagine glycans are attached at residues N164, N250, N318, and N327. 4 consecutive Ig-like C2-type domains span residues 261-355, 359-445, 455-541, and 546-636; these read PEII…ARLQ, PPLF…NSAS, PIME…AYLS, and TQII…ARLS. Intrachain disulfides connect C283–C336 and C382–C433. N-linked (GlcNAc...) asparagine glycans are attached at residues N463, N485, and N491. 2 disulfide bridges follow: C476–C525 and C567–C620. 16 N-linked (GlcNAc...) asparagine glycosylation sites follow: N628, N661, N707, N809, N870, N942, N1019, N1094, N1109, N1172, N1203, N1282, N1329, N1379, N1414, and N1420. 13 consecutive Fibronectin type-III domains span residues 643-753, 758-855, 860-967, 971-1065, 1069-1164, 1169-1270, 1275-1372, 1376-1469, 1474-1570, 1575-1677, 1682-1785, 1789-1883, and 1885-1984; these read PPSN…LPQE, PPVG…TKEG, PPTN…TMDD, EVTG…VEPV, APTA…TIQA, PPFN…TREA, GPLD…TFED, VPSN…TNNR, APSV…TLPA, GVGG…VGEA, EPRA…TLPG, APLH…GPQD, and SPVA…TPSK. N1843 and N1876 each carry an N-linked (GlcNAc...) asparagine glycan. A helical transmembrane segment spans residues 2002 to 2022; that stretch reads WFMVSLAATSIVIIVMVIAVL. The Cytoplasmic portion of the chain corresponds to 2023 to 2224; it reads CVKSKSYKYK…APLPGFSSFV (202 aa). Disordered stretches follow at residues 2068-2157 and 2171-2195; these read TLNS…RSDP and LRQSWKKTKPVRNYSSYTDSEPEGS. S2071 is modified (phosphoserine). Residues 2073 to 2085 are compositionally biased toward low complexity; that stretch reads GTLRSGTLGTLGR. Residue T2074 is modified to Phosphothreonine. 2 stretches are compositionally biased toward basic and acidic residues: residues 2112 to 2122 and 2144 to 2157; these read HSDEESLKCYD and QHSESENESVRSDP. 2 positions are modified to phosphoserine: S2113 and S2117.

Belongs to the sidekick family.

The protein localises to the membrane. In terms of biological role, participates in homotypic or heterotypic interactions in the eye during pattern formation to prevent extra cells from joining the precluster and differentiating as photoreceptor cells. The protein is Protein sidekick of Drosophila melanogaster (Fruit fly).